We begin with the raw amino-acid sequence, 589 residues long: Kelch-like protein diablo (589 aa).

Positions 1–22 are disordered; the sequence is MGDVLISDRPPSPARLSHTSEK. A BTB domain is found at 41–108; it reads CDVVINVSGR…CYTSHIVVEE (68 aa). Residues 143-245 enclose the BACK domain; sequence CLGIRAFADT…SPKFLVGTVG (103 aa). Kelch repeat units follow at residues 292–338, 340–386, 387–433, 435–480, 482–527, and 528–574; these read VLFA…VLND, LYAV…VLDG, FLYA…VLGG, LYAI…VFNN, IYAV…VVNG, and QLYA…VMRA.

It participates in protein modification; protein ubiquitination. In terms of biological role, probable substrate-specific adapter of an E3 ubiquitin-protein ligase complex which mediates the ubiquitination and subsequent proteasomal degradation of target proteins. May have a role in synapse differentiation and growth. This chain is Kelch-like protein diablo, found in Aedes aegypti (Yellowfever mosquito).